Reading from the N-terminus, the 489-residue chain is Beta-glucosidase 14 (489 aa).

The N-terminal stretch at Met-1–Ala-21 is a signal peptide. Gln-49 provides a ligand contact to a beta-D-glucoside. Asn-80 is a glycosylation site (N-linked (GlcNAc...) asparagine). A beta-D-glucoside-binding positions include His-153 and Asn-198–Glu-199. The Proton donor role is filled by Glu-199. An intrachain disulfide couples Cys-218 to Cys-226. N-linked (GlcNAc...) asparagine glycosylation is present at Asn-225. Tyr-343 lines the a beta-D-glucoside pocket. N-linked (GlcNAc...) asparagine glycosylation is present at Asn-357. Residues Glu-396, Trp-441, Glu-448–Trp-449, and Phe-457 contribute to the a beta-D-glucoside site. Glu-396 serves as the catalytic Nucleophile.

Belongs to the glycosyl hydrolase 1 family.

The enzyme catalyses Hydrolysis of terminal, non-reducing beta-D-glucosyl residues with release of beta-D-glucose.. In Arabidopsis thaliana (Mouse-ear cress), this protein is Beta-glucosidase 14.